The sequence spans 838 residues: Protein translocase subunit SecA (838 aa).

ATP-binding positions include glutamine 86, 104–108 (GEGKT), and aspartate 493. Disordered stretches follow at residues 517 to 536 (RRIDNQLRGRSGRQGDPGSS) and 789 to 838 (KVAE…CCGQ). Over residues 801 to 819 (TDGDSKAKRQPVRKKETVG) the composition is skewed to basic and acidic residues. Zn(2+) is bound by residues cysteine 824, cysteine 826, cysteine 835, and cysteine 836.

This sequence belongs to the SecA family. Monomer and homodimer. Part of the essential Sec protein translocation apparatus which comprises SecA, SecYEG and auxiliary proteins SecDF. Other proteins may also be involved. Zn(2+) serves as cofactor.

It localises to the cell membrane. The protein localises to the cytoplasm. The catalysed reaction is ATP + H2O + cellular proteinSide 1 = ADP + phosphate + cellular proteinSide 2.. Its function is as follows. Part of the Sec protein translocase complex. Interacts with the SecYEG preprotein conducting channel. Has a central role in coupling the hydrolysis of ATP to the transfer of proteins into and across the cell membrane, serving as an ATP-driven molecular motor driving the stepwise translocation of polypeptide chains across the membrane. The polypeptide is Protein translocase subunit SecA (Halalkalibacterium halodurans (strain ATCC BAA-125 / DSM 18197 / FERM 7344 / JCM 9153 / C-125) (Bacillus halodurans)).